A 96-amino-acid polypeptide reads, in one-letter code: Protein Vpr (96 aa).

The segment at 1–42 (MEQAPEDQGPQREPYNEWTLELLEELKREAVRHFPRPWLHGL) is homooligomerization. Ser-79, Ser-94, and Ser-96 each carry phosphoserine; by host.

The protein belongs to the HIV-1 VPR protein family. Homooligomer, may form homodimer. Interacts with p6-gag region of the Pr55 Gag precursor protein through a (Leu-X-X)4 motif near the C-terminus of the P6gag protein. Interacts with host UNG. May interact with host RAD23A/HHR23A. Interacts with host VPRBP/DCAF1, leading to hijack the CUL4A-RBX1-DDB1-DCAF1/VPRBP complex, mediating ubiquitination of host proteins such as TERT and ZGPAT and arrest of the cell cycle in G2 phase. Post-translationally, phosphorylated on several residues by host. These phosphorylations regulate VPR activity for the nuclear import of the HIV-1 pre-integration complex.

The protein resides in the virion. Its subcellular location is the host nucleus. It is found in the host extracellular space. During virus replication, may deplete host UNG protein, and incude G2-M cell cycle arrest. Acts by targeting specific host proteins for degradation by the 26S proteasome, through association with the cellular CUL4A-DDB1 E3 ligase complex by direct interaction with host VPRPB/DCAF-1. Cell cycle arrest reportedly occurs within hours of infection and is not blocked by antiviral agents, suggesting that it is initiated by the VPR carried into the virion. Additionally, VPR induces apoptosis in a cell cycle dependent manner suggesting that these two effects are mechanistically linked. Detected in the serum and cerebrospinal fluid of AIDS patient, VPR may also induce cell death to bystander cells. Functionally, during virus entry, plays a role in the transport of the viral pre-integration (PIC) complex to the host nucleus. This function is crucial for viral infection of non-dividing macrophages. May act directly at the nuclear pore complex, by binding nucleoporins phenylalanine-glycine (FG)-repeat regions. This is Protein Vpr from Human immunodeficiency virus type 1 group M subtype C (isolate 92BR025) (HIV-1).